The primary structure comprises 428 residues: 3-phosphoshikimate 1-carboxyvinyltransferase (428 aa).

3 residues coordinate 3-phosphoshikimate: Lys21, Ser22, and Arg26. Lys21 is a binding site for phosphoenolpyruvate. Gly93 and Arg121 together coordinate phosphoenolpyruvate. 3-phosphoshikimate contacts are provided by Ser166, Gln168, Asp314, and Lys341. Gln168 is a binding site for phosphoenolpyruvate. Asp314 serves as the catalytic Proton acceptor. Positions 345 and 388 each coordinate phosphoenolpyruvate.

This sequence belongs to the EPSP synthase family. In terms of assembly, monomer.

Its subcellular location is the cytoplasm. It catalyses the reaction 3-phosphoshikimate + phosphoenolpyruvate = 5-O-(1-carboxyvinyl)-3-phosphoshikimate + phosphate. It participates in metabolic intermediate biosynthesis; chorismate biosynthesis; chorismate from D-erythrose 4-phosphate and phosphoenolpyruvate: step 6/7. Functionally, catalyzes the transfer of the enolpyruvyl moiety of phosphoenolpyruvate (PEP) to the 5-hydroxyl of shikimate-3-phosphate (S3P) to produce enolpyruvyl shikimate-3-phosphate and inorganic phosphate. This is 3-phosphoshikimate 1-carboxyvinyltransferase from Syntrophomonas wolfei subsp. wolfei (strain DSM 2245B / Goettingen).